Here is a 410-residue protein sequence, read N- to C-terminus: Large ribosomal subunit protein uL4 (410 aa).

The protein belongs to the universal ribosomal protein uL4 family.

The protein resides in the cytoplasm. The protein is Large ribosomal subunit protein uL4 (RPL4) of Tetrahymena thermophila (strain SB210).